The primary structure comprises 1288 residues: Peroxidasin homolog (1288 aa).

The first 16 residues, 1–16 (MNLLLYLLLLVPWVLG), serve as a signal peptide directing secretion. The region spanning 17 to 51 (SEDGCPAKCTCDKKGFTVDCSNAGLTRIPKGISSN) is the LRRNT domain. LRR repeat units lie at residues 27–49 (CDKK…KGIS), 50–72 (SNVR…DLEG), 73–96 (FPLL…ILDH), 97–120 (LPEL…ASES), 122–143 (PLAS…WLLQ), 145–168 (FPEL…LFEN), and 204–227 (AYCT…LLKC). Positions 180–228 (NPWNCDCRVTKVKALLRKVEWERKAYCTNPVELRHQAIDEVEESLLKCA) constitute an LRRCT domain. N-linked (GlcNAc...) asparagine glycosylation occurs at asparagine 247. Residues 304 to 323 (LRQSHHSNGAPQFTYKPRDN) are disordered. Ig-like C2-type domains are found at residues 314–400 (PQFT…FSLD) and 407–494 (PNIY…AKLT). Cysteine 335 and cysteine 384 are disulfide-bonded. 2 LRR repeats span residues 356–381 (SSRK…DSGR) and 387–412 (VNSL…IYEG). A disulfide bond links cysteine 428 and cysteine 478. Asparagine 594 carries an N-linked (GlcNAc...) asparagine glycan. Cysteines 624 and 640 form a disulfide. Aspartate 718 is a heme b binding site. The active-site Proton acceptor is histidine 719. Aspartate 720 contributes to the Ca(2+) binding site. 2 cysteine pairs are disulfide-bonded: cysteine 739–cysteine 749 and cysteine 743–cysteine 770. N-linked (GlcNAc...) asparagine glycosylation is present at asparagine 740. Threonine 802, phenylalanine 804, aspartate 806, and serine 808 together coordinate Ca(2+). Asparagine 857 carries N-linked (GlcNAc...) asparagine glycosylation. Residues glutamate 876 and histidine 972 each contribute to the heme b site. LRR repeat units lie at residues 998 to 1022 (KAFF…LFAS) and 1049 to 1073 (SLDL…EYRQ). 2 disulfides stabilise this stretch: cysteine 1075-cysteine 1132 and cysteine 1173-cysteine 1200. One copy of the LRR 12 repeat lies at 1168–1189 (LARLLCDNGDEIDRIQKDVFMY).

Belongs to the peroxidase family. XPO subfamily. The cofactor is Ca(2+). It depends on heme b as a cofactor.

The protein localises to the secreted. The protein resides in the extracellular space. It localises to the extracellular matrix. It carries out the reaction L-lysyl-[collagen] + L-methionyl-[collagen] + H2O2 = [collagen]-L-lysyl-N-S-L-methionyl-[collagen] + 2 H2O + H(+). The enzyme catalyses bromide + H2O2 = hypobromite + H2O. It catalyses the reaction L-lysyl-[collagen] + L-methionyl-[collagen] + hypobromite = [collagen]-L-lysyl-N-S-L-methionyl-[collagen] + bromide + H2O + H(+). The catalysed reaction is L-tyrosyl-[protein] + bromide + H2O2 + H(+) = 3-bromo-L-tyrosyl-[protein] + 2 H2O. It carries out the reaction hypobromite + L-tyrosyl-[protein] + H(+) = 3-bromo-L-tyrosyl-[protein] + H2O. Catalyzes the two-electron oxidation of bromide by hydrogen peroxide and generates hypobromite as a reactive intermediate which mediates the formation of sulfilimine cross-links between methionine and hydroxylysine residues within an uncross-linked collagen IV NC1 hexamer. Plays a role in the attachment of tissues and in axonal guidance during early developmental stages. May functionally antagonize the peroxidasin pxn-2 to maintain neuronal development. The protein is Peroxidasin homolog of Caenorhabditis briggsae.